A 105-amino-acid chain; its full sequence is Nucleoid-associated protein SE_2306 (105 aa).

A disordered region spans residues 1–40 (MRGGGNMQQMMKQMQKMQKKMAQEQEKLKEERVAGTAGGG). The span at 7–16 (MQQMMKQMQK) shows a compositional bias: low complexity. Residues 21 to 33 (MAQEQEKLKEERV) show a composition bias toward basic and acidic residues.

This sequence belongs to the YbaB/EbfC family. As to quaternary structure, homodimer.

It localises to the cytoplasm. It is found in the nucleoid. Its function is as follows. Binds to DNA and alters its conformation. May be involved in regulation of gene expression, nucleoid organization and DNA protection. The chain is Nucleoid-associated protein SE_2306 from Staphylococcus epidermidis (strain ATCC 12228 / FDA PCI 1200).